The following is a 263-amino-acid chain: Shikimate dehydrogenase (NADP(+)) (263 aa).

Residues 16–18 (SKS) and T65 contribute to the shikimate site. The active-site Proton acceptor is K69. Residues N90 and D105 each coordinate shikimate. Residues 125–129 (GSGGS) and L208 contribute to the NADP(+) site. Residue Y210 participates in shikimate binding. G230 lines the NADP(+) pocket.

Belongs to the shikimate dehydrogenase family. As to quaternary structure, homodimer.

It catalyses the reaction shikimate + NADP(+) = 3-dehydroshikimate + NADPH + H(+). Its pathway is metabolic intermediate biosynthesis; chorismate biosynthesis; chorismate from D-erythrose 4-phosphate and phosphoenolpyruvate: step 4/7. In terms of biological role, involved in the biosynthesis of the chorismate, which leads to the biosynthesis of aromatic amino acids. Catalyzes the reversible NADPH linked reduction of 3-dehydroshikimate (DHSA) to yield shikimate (SA). The chain is Shikimate dehydrogenase (NADP(+)) from Helicobacter acinonychis (strain Sheeba).